We begin with the raw amino-acid sequence, 471 residues long: uncharacterized protein (471 aa).

The disordered stretch occupies residues 13 to 57; the sequence is KGGATIGATPMESDSSVSALSGSSASKVSRRGRRRSHLASKSSAP. A compositionally biased stretch (low complexity) spans 27-39; that stretch reads SSVSALSGSSASK. Basic residues predominate over residues 40 to 50; sequence VSRRGRRRSHL. 2 consecutive CCHC-type zinc fingers follow at residues 397–414 and 417–434; these read YACH…ECRQ and SVCR…KCQN. Residues 438-457 form a gag-like cysteine motif region; that stretch reads CRNCRHRGQPSGHYMLSNAC.

To corresponding ORF of B.mori (R1BM).

This is an uncharacterized protein from Drosophila melanogaster (Fruit fly).